The following is a 312-amino-acid chain: Transcription factor Ouib (312 aa).

Positions 4 to 79 (IVCRVCGRQK…IKTQTKWLTI (76 aa)) constitute a ZAD domain. Residues C6, C9, C52, and C55 each contribute to the Zn(2+) site. C2H2-type zinc fingers lie at residues 167–189 (YICELCGTHATSKPTFQRHMRKH), 195–217 (FGCKDCDARFLSAGELRAHHRVH), 223–245 (FACRFCEKRYVSYMGRLIHERTH), 251–273 (YVCEECGKKFTTAYVLKNHMVIH), and 279–303 (FRCDICDRSFQRKAHLVTHTRSMMH).

Expressed predominantly in the prothoracic gland during embryonic and larval development.

It localises to the nucleus. Its function is as follows. Transcription factor required for ecdysteroid production in the prothoracic gland by activating transcription of the ecdysteroid biosynthesis gene spok. Binds to the 5'-AGCTTTATTATTTAG-3' DNA sequence in the spok enhancer region. The sequence is that of Transcription factor Ouib from Drosophila melanogaster (Fruit fly).